The sequence spans 266 residues: MGQKIHPTGFRLAVSRNWASRWYANNNNFAAMLQEDIGVREYLKKKLKNASVGRVVIERPAKNARITIFSSRPGVVIGKKGEDIELLKTELQRRMGVPVHVNIEEIRKPETDAQLIADSITQQLERRIMFRRAMKRAMQNAMRLGAQGIKIMSAGRLNGIEIARTEWYREGRVPLHTLRADIDYATSEAKTTYGIIGVKVWVYKGDTLGRNDAPVVEEVTEDKRPRRNARPGDRRPRRDGEGGAPGARRGGPRRGAGKPEDGKTGE.

The region spanning 39-107 (VREYLKKKLK…PVHVNIEEIR (69 aa)) is the KH type-2 domain. The disordered stretch occupies residues 214 to 266 (PVVEEVTEDKRPRRNARPGDRRPRRDGEGGAPGARRGGPRRGAGKPEDGKTGE). 2 stretches are compositionally biased toward basic and acidic residues: residues 230–241 (RPGDRRPRRDGE) and 257–266 (GKPEDGKTGE).

Belongs to the universal ribosomal protein uS3 family. As to quaternary structure, part of the 30S ribosomal subunit. Forms a tight complex with proteins S10 and S14.

Its function is as follows. Binds the lower part of the 30S subunit head. Binds mRNA in the 70S ribosome, positioning it for translation. The protein is Small ribosomal subunit protein uS3 of Burkholderia mallei (strain NCTC 10247).